A 188-amino-acid polypeptide reads, in one-letter code: Capsid protein (188 aa).

The protein belongs to the tymoviruses capsid protein family.

Its subcellular location is the virion. In terms of biological role, self-assembles to form a T=3 icosahedral capsid composed of 180 copies of the capsid protein. The capsid encapsulates the single-stranded RNA genome. This Solanum lycopersicum (Tomato) protein is Capsid protein.